We begin with the raw amino-acid sequence, 77 residues long: Conotoxin Ar5.1 b (77 aa).

The first 19 residues, 1-19 (MLCLPVFIILLLLASPAAS), serve as a signal peptide directing secretion. Positions 20 to 44 (NPLKTRIQSDLIRAALEDADMKNEK) are excised as a propeptide.

Belongs to the conotoxin T superfamily. In terms of processing, contains 2 disulfide bonds that can be either 'C1-C3, C2-C4' or 'C1-C4, C2-C3', since these disulfide connectivities have been observed for conotoxins with cysteine framework V (for examples, see AC P0DQQ7 and AC P81755). In terms of tissue distribution, expressed by the venom duct.

The protein resides in the secreted. This chain is Conotoxin Ar5.1 b, found in Conus arenatus (Sand-dusted cone).